We begin with the raw amino-acid sequence, 362 residues long: Methylthioribose-1-phosphate isomerase (362 aa).

Residues 49–51 (RGA), Arg-89, and Gln-201 contribute to the substrate site. Asp-242 acts as the Proton donor in catalysis. Substrate is bound at residue 252–253 (NK).

This sequence belongs to the eIF-2B alpha/beta/delta subunits family. MtnA subfamily.

It catalyses the reaction 5-(methylsulfanyl)-alpha-D-ribose 1-phosphate = 5-(methylsulfanyl)-D-ribulose 1-phosphate. It participates in amino-acid biosynthesis; L-methionine biosynthesis via salvage pathway; L-methionine from S-methyl-5-thio-alpha-D-ribose 1-phosphate: step 1/6. Its function is as follows. Catalyzes the interconversion of methylthioribose-1-phosphate (MTR-1-P) into methylthioribulose-1-phosphate (MTRu-1-P). This Leptospira borgpetersenii serovar Hardjo-bovis (strain JB197) protein is Methylthioribose-1-phosphate isomerase.